Here is a 231-residue protein sequence, read N- to C-terminus: Large ribosomal subunit protein uL1 (231 aa).

This sequence belongs to the universal ribosomal protein uL1 family. Part of the 50S ribosomal subunit.

Functionally, binds directly to 23S rRNA. The L1 stalk is quite mobile in the ribosome, and is involved in E site tRNA release. In terms of biological role, protein L1 is also a translational repressor protein, it controls the translation of the L11 operon by binding to its mRNA. The polypeptide is Large ribosomal subunit protein uL1 (Cellvibrio japonicus (strain Ueda107) (Pseudomonas fluorescens subsp. cellulosa)).